We begin with the raw amino-acid sequence, 426 residues long: Serine--tRNA ligase (426 aa).

233–235 contacts L-serine; that stretch reads TAE. 264-266 serves as a coordination point for ATP; the sequence is RSE. Glu-287 lines the L-serine pocket. 351–354 lines the ATP pocket; sequence EISS. Residue Ser-387 participates in L-serine binding.

It belongs to the class-II aminoacyl-tRNA synthetase family. Type-1 seryl-tRNA synthetase subfamily. In terms of assembly, homodimer. The tRNA molecule binds across the dimer.

The protein localises to the cytoplasm. It carries out the reaction tRNA(Ser) + L-serine + ATP = L-seryl-tRNA(Ser) + AMP + diphosphate + H(+). The enzyme catalyses tRNA(Sec) + L-serine + ATP = L-seryl-tRNA(Sec) + AMP + diphosphate + H(+). Its pathway is aminoacyl-tRNA biosynthesis; selenocysteinyl-tRNA(Sec) biosynthesis; L-seryl-tRNA(Sec) from L-serine and tRNA(Sec): step 1/1. In terms of biological role, catalyzes the attachment of serine to tRNA(Ser). Is also able to aminoacylate tRNA(Sec) with serine, to form the misacylated tRNA L-seryl-tRNA(Sec), which will be further converted into selenocysteinyl-tRNA(Sec). In Pseudomonas paraeruginosa (strain DSM 24068 / PA7) (Pseudomonas aeruginosa (strain PA7)), this protein is Serine--tRNA ligase.